Reading from the N-terminus, the 407-residue chain is Peptidase T (407 aa).

His-78 is a binding site for Zn(2+). Asp-80 is a catalytic residue. Asp-141 lines the Zn(2+) pocket. Glu-175 (proton acceptor) is an active-site residue. Zn(2+)-binding residues include Glu-176, Asp-198, and His-380.

It belongs to the peptidase M20B family. Requires Zn(2+) as cofactor.

The protein resides in the cytoplasm. The enzyme catalyses Release of the N-terminal residue from a tripeptide.. Its function is as follows. Cleaves the N-terminal amino acid of tripeptides. The sequence is that of Peptidase T from Clostridium novyi (strain NT).